A 227-amino-acid chain; its full sequence is Small ribosomal subunit protein uS3 (227 aa).

The KH type-2 domain maps to 38–106 (LRKFIKDRFY…NVNINIQEIR (69 aa)).

Belongs to the universal ribosomal protein uS3 family. In terms of assembly, part of the 30S ribosomal subunit. Forms a tight complex with proteins S10 and S14.

Binds the lower part of the 30S subunit head. Binds mRNA in the 70S ribosome, positioning it for translation. The sequence is that of Small ribosomal subunit protein uS3 from Syntrophomonas wolfei subsp. wolfei (strain DSM 2245B / Goettingen).